Here is a 103-residue protein sequence, read N- to C-terminus: NADH-quinone oxidoreductase subunit K (103 aa).

Helical transmembrane passes span 1-21 (MIVP…VGGV), 29-49 (ILLI…AFAG), and 62-82 (AVII…ALLV). Residues 84-103 (GRRGGGTDRADSYDRLGEES) form a disordered region. The segment covering 88 to 103 (GGTDRADSYDRLGEES) has biased composition (basic and acidic residues).

The protein belongs to the complex I subunit 4L family. In terms of assembly, NDH-1 is composed of 14 different subunits. Subunits NuoA, H, J, K, L, M, N constitute the membrane sector of the complex.

The protein resides in the cell inner membrane. The enzyme catalyses a quinone + NADH + 5 H(+)(in) = a quinol + NAD(+) + 4 H(+)(out). NDH-1 shuttles electrons from NADH, via FMN and iron-sulfur (Fe-S) centers, to quinones in the respiratory chain. The immediate electron acceptor for the enzyme in this species is believed to be ubiquinone. Couples the redox reaction to proton translocation (for every two electrons transferred, four hydrogen ions are translocated across the cytoplasmic membrane), and thus conserves the redox energy in a proton gradient. The polypeptide is NADH-quinone oxidoreductase subunit K (Solidesulfovibrio magneticus (strain ATCC 700980 / DSM 13731 / RS-1) (Desulfovibrio magneticus)).